Reading from the N-terminus, the 245-residue chain is 1-acyl-sn-glycerol-3-phosphate acyltransferase (245 aa).

M1 is modified (N-formylmethionine). The short motif at H73–D78 is the HXXXXD motif element.

It belongs to the 1-acyl-sn-glycerol-3-phosphate acyltransferase family.

It is found in the cell inner membrane. It carries out the reaction a 1-acyl-sn-glycero-3-phosphate + an acyl-CoA = a 1,2-diacyl-sn-glycero-3-phosphate + CoA. It catalyses the reaction a fatty acyl-[ACP] + a 1-acyl-sn-glycero-3-phosphate = a 1,2-diacyl-sn-glycero-3-phosphate + holo-[ACP]. The protein operates within phospholipid metabolism; CDP-diacylglycerol biosynthesis; CDP-diacylglycerol from sn-glycerol 3-phosphate: step 2/3. Its function is as follows. Converts lysophosphatidic acid (LPA) into phosphatidic acid by incorporating an acyl moiety at the 2 position. This enzyme can utilize either acyl-CoA or acyl-ACP as the fatty acyl donor. This chain is 1-acyl-sn-glycerol-3-phosphate acyltransferase (plsC), found in Escherichia coli (strain K12).